We begin with the raw amino-acid sequence, 177 residues long: Large ribosomal subunit protein uL6 (177 aa).

The protein belongs to the universal ribosomal protein uL6 family. Part of the 50S ribosomal subunit.

In terms of biological role, this protein binds to the 23S rRNA, and is important in its secondary structure. It is located near the subunit interface in the base of the L7/L12 stalk, and near the tRNA binding site of the peptidyltransferase center. The protein is Large ribosomal subunit protein uL6 of Salmonella arizonae (strain ATCC BAA-731 / CDC346-86 / RSK2980).